We begin with the raw amino-acid sequence, 333 residues long: Autoinducer 2 import system permease protein LsrC (333 aa).

Helical transmembrane passes span 14-34 (LIAI…YFSL), 39-59 (LVFS…LVML), 70-90 (IAGL…SLSV), 93-113 (LLTL…VTWL), 115-135 (IPAI…MLLL), 157-177 (LNIS…AWIL), 206-226 (IQII…IVFA), 252-272 (GISL…AFFL), and 284-304 (LPAW…LIFD).

It belongs to the binding-protein-dependent transport system permease family. AraH/RbsC subfamily. The complex is composed of two ATP-binding proteins (LsrA), two transmembrane proteins (LsrC and LsrD) and a solute-binding protein (LsrB).

It localises to the cell inner membrane. In terms of biological role, part of the ABC transporter complex LsrABCD involved in autoinducer 2 (AI-2) import. Probably responsible for the translocation of the substrate across the membrane. The protein is Autoinducer 2 import system permease protein LsrC (lsrC) of Photorhabdus laumondii subsp. laumondii (strain DSM 15139 / CIP 105565 / TT01) (Photorhabdus luminescens subsp. laumondii).